A 61-amino-acid chain; its full sequence is Large ribosomal subunit protein uL30 (61 aa).

Belongs to the universal ribosomal protein uL30 family. In terms of assembly, part of the 50S ribosomal subunit.

The polypeptide is Large ribosomal subunit protein uL30 (Treponema denticola (strain ATCC 35405 / DSM 14222 / CIP 103919 / JCM 8153 / KCTC 15104)).